Reading from the N-terminus, the 59-residue chain is MRQLKGKPKKETSKDKRERKQAMQDARKQVATVVLPTVAVVVLLIVFFVYAATRPGAIA.

Residues 1-23 form a disordered region; the sequence is MRQLKGKPKKETSKDKRERKQAM. Residues 9–23 are compositionally biased toward basic and acidic residues; that stretch reads KKETSKDKRERKQAM. The stretch at 9–30 forms a coiled coil; sequence KKETSKDKRERKQAMQDARKQV. Residues 32–52 form a helical membrane-spanning segment; that stretch reads TVVLPTVAVVVLLIVFFVYAA.

It belongs to the SMCO4 family.

The protein resides in the membrane. This is Single-pass membrane and coiled-coil domain-containing protein 4 (smco4) from Takifugu rubripes (Japanese pufferfish).